The following is a 1043-amino-acid chain: Calcium-transporting ATPase 1, plasma membrane-type (1043 aa).

Residues 1–178 (MSFIRKKSME…FLWDASQDMT (178 aa)) are Cytoplasmic-facing. The next 2 membrane-spanning stretches (helical) occupy residues 179–199 (LLLLAFCAAVSVAIGLATEGW) and 202–222 (GMYDGVGIMLTILLVVMITAA). The Cytoplasmic portion of the chain corresponds to 223 to 258 (SDYKQSLQFRDLDKEKKKIDVQVTRDGYRQKVSIYD). 2 consecutive transmembrane segments (helical) span residues 259 to 279 (IVVGDIVHLSIGDQVPADGLF) and 356 to 376 (VATIIGKIGLAFAVLTFTVLM). Residues 377 to 395 (ARFLLGKAGAPGGLLRWRM) lie on the Cytoplasmic side of the membrane. The helical transmembrane segment at 396–416 (VDALAVLNFFAVAVTIIVVAV) threads the bilayer. Residue Asp460 is the 4-aspartylphosphate intermediate of the active site. Positions 761 and 765 each coordinate Mg(2+). A helical transmembrane segment spans residues 824–844 (LTVNVVALMVNFISASFTGSA). Pro845 is a topological domain (cytoplasmic). Transmembrane regions (helical) follow at residues 846-866 (LTIVQLLWVNLIMDTLGALAL) and 891-911 (VMWRNIVGQSIYQLVVLGVLL). Residues 912 to 955 (LRGKSLLQINGPQADSLLNTFVFNTFVFCQVFNEVNSREMEKIN) lie on the Cytoplasmic side of the membrane. The next 2 membrane-spanning stretches (helical) occupy residues 956–976 (VFSGIFSSWIFSAVVGVTAGF) and 998–1018 (WLTSVLIGSVGLVIGAILKCI). At 1019–1043 (PVESGSDASDRHDGYRPIPTGPSAV) the chain is on the cytoplasmic side. Residues 1023-1043 (GSDASDRHDGYRPIPTGPSAV) are disordered.

The protein belongs to the cation transport ATPase (P-type) (TC 3.A.3) family. Type IIB subfamily.

The protein resides in the membrane. It carries out the reaction Ca(2+)(in) + ATP + H2O = Ca(2+)(out) + ADP + phosphate + H(+). With respect to regulation, activated by calmodulin. Functionally, this magnesium-dependent enzyme catalyzes the hydrolysis of ATP coupled with the translocation of calcium from the cytosol out of the cell, into the endoplasmic reticulum, or into organelles. The polypeptide is Calcium-transporting ATPase 1, plasma membrane-type (Oryza sativa subsp. japonica (Rice)).